A 388-amino-acid polypeptide reads, in one-letter code: Methylthioribose-1-phosphate isomerase (388 aa).

Residue aspartate 253 is the Proton donor of the active site.

It belongs to the eIF-2B alpha/beta/delta subunits family. MtnA subfamily.

It is found in the cytoplasm. The protein resides in the nucleus. The catalysed reaction is 5-(methylsulfanyl)-alpha-D-ribose 1-phosphate = 5-(methylsulfanyl)-D-ribulose 1-phosphate. Its pathway is amino-acid biosynthesis; L-methionine biosynthesis via salvage pathway; L-methionine from S-methyl-5-thio-alpha-D-ribose 1-phosphate: step 1/6. Catalyzes the interconversion of methylthioribose-1-phosphate (MTR-1-P) into methylthioribulose-1-phosphate (MTRu-1-P). This Fusarium vanettenii (strain ATCC MYA-4622 / CBS 123669 / FGSC 9596 / NRRL 45880 / 77-13-4) (Fusarium solani subsp. pisi) protein is Methylthioribose-1-phosphate isomerase.